We begin with the raw amino-acid sequence, 660 residues long: Bifunctional polymyxin resistance protein ArnA (660 aa).

The interval 1–304 (MKAVIFAYHD…TLGLVAGARL (304 aa)) is formyltransferase ArnAFT. Histidine 104 (proton donor; for formyltransferase activity) is an active-site residue. (6R)-10-formyltetrahydrofolate-binding positions include arginine 114 and 136–140 (VKRAD). The interval 314–660 (RRIRVLILGV…RSVDVAERAS (347 aa)) is dehydrogenase ArnADH. Residues aspartate 347 and 368-369 (DI) contribute to the NAD(+) site. UDP-alpha-D-glucuronate is bound by residues alanine 393, tyrosine 398, and 432 to 433 (TS). Residue glutamate 434 is the Proton acceptor; for decarboxylase activity of the active site. UDP-alpha-D-glucuronate is bound by residues arginine 460, asparagine 492, 526-535 (KLIDGGQQKR), and tyrosine 613. Catalysis depends on arginine 619, which acts as the Proton donor; for decarboxylase activity.

It in the N-terminal section; belongs to the Fmt family. UDP-L-Ara4N formyltransferase subfamily. This sequence in the C-terminal section; belongs to the NAD(P)-dependent epimerase/dehydratase family. UDP-glucuronic acid decarboxylase subfamily. In terms of assembly, homohexamer, formed by a dimer of trimers.

The catalysed reaction is UDP-alpha-D-glucuronate + NAD(+) = UDP-beta-L-threo-pentopyranos-4-ulose + CO2 + NADH. The enzyme catalyses UDP-4-amino-4-deoxy-beta-L-arabinose + (6R)-10-formyltetrahydrofolate = UDP-4-deoxy-4-formamido-beta-L-arabinose + (6S)-5,6,7,8-tetrahydrofolate + H(+). It functions in the pathway nucleotide-sugar biosynthesis; UDP-4-deoxy-4-formamido-beta-L-arabinose biosynthesis; UDP-4-deoxy-4-formamido-beta-L-arabinose from UDP-alpha-D-glucuronate: step 1/3. Its pathway is nucleotide-sugar biosynthesis; UDP-4-deoxy-4-formamido-beta-L-arabinose biosynthesis; UDP-4-deoxy-4-formamido-beta-L-arabinose from UDP-alpha-D-glucuronate: step 3/3. The protein operates within bacterial outer membrane biogenesis; lipopolysaccharide biosynthesis. Bifunctional enzyme that catalyzes the oxidative decarboxylation of UDP-glucuronic acid (UDP-GlcUA) to UDP-4-keto-arabinose (UDP-Ara4O) and the addition of a formyl group to UDP-4-amino-4-deoxy-L-arabinose (UDP-L-Ara4N) to form UDP-L-4-formamido-arabinose (UDP-L-Ara4FN). The modified arabinose is attached to lipid A and is required for resistance to polymyxin and cationic antimicrobial peptides. The sequence is that of Bifunctional polymyxin resistance protein ArnA from Salmonella choleraesuis (strain SC-B67).